A 212-amino-acid polypeptide reads, in one-letter code: Putative 3-methyladenine DNA glycosylase (212 aa).

The protein belongs to the DNA glycosylase MPG family.

The chain is Putative 3-methyladenine DNA glycosylase from Frankia casuarinae (strain DSM 45818 / CECT 9043 / HFP020203 / CcI3).